Reading from the N-terminus, the 180-residue chain is Large ribosomal subunit protein uL5 (180 aa).

Belongs to the universal ribosomal protein uL5 family. Part of the 50S ribosomal subunit; part of the 5S rRNA/L5/L18/L25 subcomplex. Contacts the 5S rRNA and the P site tRNA. Forms a bridge to the 30S subunit in the 70S ribosome.

Functionally, this is one of the proteins that bind and probably mediate the attachment of the 5S RNA into the large ribosomal subunit, where it forms part of the central protuberance. In the 70S ribosome it contacts protein S13 of the 30S subunit (bridge B1b), connecting the 2 subunits; this bridge is implicated in subunit movement. Contacts the P site tRNA; the 5S rRNA and some of its associated proteins might help stabilize positioning of ribosome-bound tRNAs. In Streptococcus thermophilus (strain CNRZ 1066), this protein is Large ribosomal subunit protein uL5.